A 96-amino-acid polypeptide reads, in one-letter code: ATP synthase subunit c (96 aa).

Transmembrane regions (helical) follow at residues 26–46 (GLVL…CGIG) and 68–88 (IMVT…YALV).

This sequence belongs to the ATPase C chain family. In terms of assembly, F-type ATPases have 2 components, F(1) - the catalytic core - and F(0) - the membrane proton channel. F(1) has five subunits: alpha(3), beta(3), gamma(1), delta(1), epsilon(1). F(0) has three main subunits: a(1), b(2) and c(10-14). The alpha and beta chains form an alternating ring which encloses part of the gamma chain. F(1) is attached to F(0) by a central stalk formed by the gamma and epsilon chains, while a peripheral stalk is formed by the delta and b chains.

It localises to the cell inner membrane. Its function is as follows. F(1)F(0) ATP synthase produces ATP from ADP in the presence of a proton or sodium gradient. F-type ATPases consist of two structural domains, F(1) containing the extramembraneous catalytic core and F(0) containing the membrane proton channel, linked together by a central stalk and a peripheral stalk. During catalysis, ATP synthesis in the catalytic domain of F(1) is coupled via a rotary mechanism of the central stalk subunits to proton translocation. In terms of biological role, key component of the F(0) channel; it plays a direct role in translocation across the membrane. A homomeric c-ring of between 10-14 subunits forms the central stalk rotor element with the F(1) delta and epsilon subunits. The polypeptide is ATP synthase subunit c (Oleidesulfovibrio alaskensis (strain ATCC BAA-1058 / DSM 17464 / G20) (Desulfovibrio alaskensis)).